A 244-amino-acid polypeptide reads, in one-letter code: T-cell immunoreceptor with Ig and ITIM domains (244 aa).

Positions 1–21 (MRWCLLLIWAQGLRQAPLASG) are cleaved as a signal peptide. One can recognise an Ig-like V-type domain in the interval 22-124 (MMTGTIETTG…DGTYTGRIFL (103 aa)). Residues 22–141 (MMTGTIETTG…AEHGARFQIP (120 aa)) lie on the Extracellular side of the membrane. Asn-32 and Asn-101 each carry an N-linked (GlcNAc...) asparagine glycan. Positions 32–42 (NISAEKGGSII) are homodimerization. Cys-45 and Cys-108 are disulfide-bonded. A helical transmembrane segment spans residues 142–162 (LLGAMAATLVVICTAVIVVVA). The Cytoplasmic segment spans residues 163–244 (LTRKKKALRI…GNCSFFTETG (82 aa)). Residue Tyr-225 is modified to Phosphotyrosine. Positions 229–234 (LSYRSL) match the ITIM motif motif.

In terms of assembly, homodimer in cis; binds with high affinity to PVR, forming a heterotetrameric assembly of two TIGIT and two PVR molecules. Binds with lower affinity to NECTIN2 and NECTIN3. Interacts with GRB2. Interacts with NECTIN4. Expressed at low levels on peripheral memory and regulatory CD4+ T-cells and NK cells and is up-regulated following activation of these cells (at protein level).

It is found in the cell membrane. Inhibitory receptor that plays a role in the modulation of immune responses. Suppresses T-cell activation by promoting the generation of mature immunoregulatory dendritic cells. Upon binding to its ligands PVR/CD155 or NECTIN2/CD112, which are expressed on antigen-presenting cells, sends inhibitory signals to the T-cell or NK cell. Mechanistically, interaction with ligand leads to phosphorylation of the cytoplasmic tail by Src family tyrosine kinases such as FYN or LCK, allowing subsequent binding to adapter GRB2 and SHIP1/INPP5D. In turn, inhibits PI3K and MAPK signaling cascades. In addition, associates with beta-arrestin-2/ARRB2 to recruit SHIP1/INPP5D that suppresses autoubiquitination of TRAF6 and subsequently inhibits NF-kappa-B signaling pathway. Also acts as a receptor for NECTIN4 to inhibit NK cell cytotoxicity. The polypeptide is T-cell immunoreceptor with Ig and ITIM domains (TIGIT) (Homo sapiens (Human)).